Reading from the N-terminus, the 455-residue chain is Phosphomethylpyrimidine synthase (455 aa).

Substrate contacts are provided by residues asparagine 80, methionine 109, tyrosine 139, histidine 175, 195–197 (SRG), 236–239 (DSLR), and glutamate 275. Histidine 279 contacts Zn(2+). A substrate-binding site is contributed by tyrosine 302. Residue histidine 343 coordinates Zn(2+). [4Fe-4S] cluster-binding residues include cysteine 423, cysteine 426, and cysteine 431.

Belongs to the ThiC family. [4Fe-4S] cluster serves as cofactor.

The enzyme catalyses 5-amino-1-(5-phospho-beta-D-ribosyl)imidazole + S-adenosyl-L-methionine = 4-amino-2-methyl-5-(phosphooxymethyl)pyrimidine + CO + 5'-deoxyadenosine + formate + L-methionine + 3 H(+). It participates in cofactor biosynthesis; thiamine diphosphate biosynthesis. Catalyzes the synthesis of the hydroxymethylpyrimidine phosphate (HMP-P) moiety of thiamine from aminoimidazole ribotide (AIR) in a radical S-adenosyl-L-methionine (SAM)-dependent reaction. This chain is Phosphomethylpyrimidine synthase, found in Synechococcus sp. (strain JA-2-3B'a(2-13)) (Cyanobacteria bacterium Yellowstone B-Prime).